A 616-amino-acid chain; its full sequence is 1-deoxy-D-xylulose-5-phosphate synthase (616 aa).

Thiamine diphosphate contacts are provided by residues histidine 74 and 115 to 117 (GHS). Aspartate 146 contributes to the Mg(2+) binding site. Thiamine diphosphate is bound by residues 147-148 (GA), asparagine 175, tyrosine 282, and glutamate 365. Asparagine 175 serves as a coordination point for Mg(2+).

This sequence belongs to the transketolase family. DXPS subfamily. In terms of assembly, homodimer. Mg(2+) serves as cofactor. The cofactor is thiamine diphosphate.

The enzyme catalyses D-glyceraldehyde 3-phosphate + pyruvate + H(+) = 1-deoxy-D-xylulose 5-phosphate + CO2. The protein operates within metabolic intermediate biosynthesis; 1-deoxy-D-xylulose 5-phosphate biosynthesis; 1-deoxy-D-xylulose 5-phosphate from D-glyceraldehyde 3-phosphate and pyruvate: step 1/1. Catalyzes the acyloin condensation reaction between C atoms 2 and 3 of pyruvate and glyceraldehyde 3-phosphate to yield 1-deoxy-D-xylulose-5-phosphate (DXP). This Chromobacterium violaceum (strain ATCC 12472 / DSM 30191 / JCM 1249 / CCUG 213 / NBRC 12614 / NCIMB 9131 / NCTC 9757 / MK) protein is 1-deoxy-D-xylulose-5-phosphate synthase.